We begin with the raw amino-acid sequence, 626 residues long: (+)-3-carene synthase 1, chloroplastic (626 aa).

The N-terminal 45 residues, 1–45 (MSLISAVPLASSCVSKSLISSVREHKALRRAIATLQMSRPGKSVA), are a transit peptide targeting the chloroplast. Mg(2+) contacts are provided by Asp-377, Asp-381, and Asp-529. The DDXXD motif signature appears at 377 to 381 (DDMYD).

The protein belongs to the terpene synthase family. Tpsd subfamily. It depends on Mg(2+) as a cofactor. Mn(2+) serves as cofactor.

Its subcellular location is the plastid. It is found in the chloroplast. It carries out the reaction (2E)-geranyl diphosphate = (+)-car-3-ene + diphosphate. It catalyses the reaction (2E)-geranyl diphosphate = terpinolene + diphosphate. The protein operates within terpene metabolism; oleoresin biosynthesis. It participates in secondary metabolite biosynthesis; terpenoid biosynthesis. Functionally, monoterpene synthase (TPS) involved in the biosynthesis of monoterpene natural products included in conifer oleoresin secretions and volatile emissions; these compounds contribute to biotic and abiotic stress defense against herbivores and pathogens. Catalyzes the conversion of (2E)-geranyl diphosphate (GPP) to (+)-3-carene and, to a lower extent, to terpinolene. In Pinus banksiana (Jack pine), this protein is (+)-3-carene synthase 1, chloroplastic.